The primary structure comprises 273 residues: SPRY domain-containing SOCS box protein 1 (273 aa).

Phosphotyrosine is present on Tyr-31. The region spanning 33-231 (KPTRLDLLLD…IRMRYLNGLD (199 aa)) is the B30.2/SPRY domain. The SOCS box domain occupies 232–273 (PEPLPLMDLCRRSVRLALGKERLGAIPALPLPASLKAYLLYQ).

Belongs to the SPSB family. As to quaternary structure, component of the probable ECS(SPSB1) E3 ubiquitin-protein ligase complex which contains CUL5, RNF7/RBX2, Elongin BC complex and SPSB1. Interacts with CUL5, RNF7, ELOB and ELOC. Directly interacts with MET tyrosine kinase domain in the presence and in the absence of HGF, however HGF treatment has a positive effect on this interaction. When phosphorylated, interacts with RASA1 without affecting its stability. Interacts (via B30.2/SPRY domain) with PAWR; this interaction is direct and occurs in association with the Elongin BC complex. Interacts with EPHB2. Interacts with NOS2.

It is found in the cytoplasm. Its subcellular location is the cytosol. It functions in the pathway protein modification; protein ubiquitination. Substrate recognition component of a SCF-like ECS (Elongin BC-CUL2/5-SOCS-box protein) E3 ubiquitin-protein ligase complex which mediates the ubiquitination and subsequent proteasomal degradation of target proteins. Negatively regulates nitric oxide (NO) production and limits cellular toxicity in activated macrophages by mediating the ubiquitination and proteasomal degradation of NOS2. Acts as a bridge which links the NOS2 with the ECS E3 ubiquitin ligase complex components ELOC and CUL5. The polypeptide is SPRY domain-containing SOCS box protein 1 (Spsb1) (Mus musculus (Mouse)).